We begin with the raw amino-acid sequence, 188 residues long: Elongation factor P (188 aa).

At lysine 34 the chain carries N6-(3,6-diaminohexanoyl)-5-hydroxylysine.

It belongs to the elongation factor P family. In terms of processing, may be beta-lysylated on the epsilon-amino group of Lys-34 by the combined action of EpmA and EpmB, and then hydroxylated on the C5 position of the same residue by EpmC (if this protein is present). Lysylation is critical for the stimulatory effect of EF-P on peptide-bond formation. The lysylation moiety may extend toward the peptidyltransferase center and stabilize the terminal 3-CCA end of the tRNA. Hydroxylation of the C5 position on Lys-34 may allow additional potential stabilizing hydrogen-bond interactions with the P-tRNA.

It is found in the cytoplasm. It functions in the pathway protein biosynthesis; polypeptide chain elongation. Its function is as follows. Involved in peptide bond synthesis. Alleviates ribosome stalling that occurs when 3 or more consecutive Pro residues or the sequence PPG is present in a protein, possibly by augmenting the peptidyl transferase activity of the ribosome. Modification of Lys-34 is required for alleviation. This is Elongation factor P from Citrobacter koseri (strain ATCC BAA-895 / CDC 4225-83 / SGSC4696).